The primary structure comprises 59 residues: UPF0181 protein YoaH (59 aa).

The protein belongs to the UPF0181 family.

The sequence is that of UPF0181 protein YoaH from Shigella sonnei (strain Ss046).